The sequence spans 100 residues: Urease subunit gamma (100 aa).

Belongs to the urease gamma subunit family. As to quaternary structure, heterotrimer of UreA (gamma), UreB (beta) and UreC (alpha) subunits. Three heterotrimers associate to form the active enzyme.

The protein localises to the cytoplasm. It carries out the reaction urea + 2 H2O + H(+) = hydrogencarbonate + 2 NH4(+). It functions in the pathway nitrogen metabolism; urea degradation; CO(2) and NH(3) from urea (urease route): step 1/1. The sequence is that of Urease subunit gamma from Allorhizobium ampelinum (strain ATCC BAA-846 / DSM 112012 / S4) (Agrobacterium vitis (strain S4)).